A 197-amino-acid chain; its full sequence is MKILLATGNEQKAKELKCILPKNIGNKEIEYLTLGDFPDLRMPEETGKTLEENAILKAREAARQAGIAALADDTGLEVDALNGEPGVRSARYAGEYCDPDENNRKLLDSLDGLFLGQRTARFKTVACLATPEGEYELAEGVLGGLIGFGYRGENGFGYDPLFIVKGKSKTLAELTLDEKNKISHRRKAFEKISKKIK.

7–12 (TGNEQK) contributes to the substrate binding site. Mg(2+) contacts are provided by E44 and D73. D73 acts as the Proton acceptor in catalysis. Substrate contacts are provided by residues T74, 156–159 (FGYD), K179, and 184–185 (HR).

The protein belongs to the HAM1 NTPase family. In terms of assembly, homodimer. Mg(2+) is required as a cofactor.

The enzyme catalyses XTP + H2O = XMP + diphosphate + H(+). The catalysed reaction is dITP + H2O = dIMP + diphosphate + H(+). It catalyses the reaction ITP + H2O = IMP + diphosphate + H(+). Pyrophosphatase that catalyzes the hydrolysis of nucleoside triphosphates to their monophosphate derivatives, with a high preference for the non-canonical purine nucleotides XTP (xanthosine triphosphate), dITP (deoxyinosine triphosphate) and ITP. Seems to function as a house-cleaning enzyme that removes non-canonical purine nucleotides from the nucleotide pool, thus preventing their incorporation into DNA/RNA and avoiding chromosomal lesions. This is dITP/XTP pyrophosphatase from Elusimicrobium minutum (strain Pei191).